Reading from the N-terminus, the 217-residue chain is Ran-binding protein 1 homolog b (217 aa).

Disordered stretches follow at residues 1–32 (MASISNEPERENRDEEETGANEDEDTGAQVAP) and 160–217 (ESEE…VPSA). Alanine 2 is modified (N-acetylalanine). The span at 14 to 26 (DEEETGANEDEDT) shows a compositional bias: acidic residues. One can recognise a RanBD1 domain in the interval 29–164 (QVAPIVRLEE…FKEVAESEEE (136 aa)). Residues 181–217 (LTVEEKESEKKPVEKAEENKKSEAVEEKKTEESVPSA) show a composition bias toward basic and acidic residues.

Interacts with the GTP-bound form of RAN1, RAN2 and RAN3.

The protein localises to the nucleus. The protein resides in the nuclear pore complex. The polypeptide is Ran-binding protein 1 homolog b (RANBP1B) (Arabidopsis thaliana (Mouse-ear cress)).